The following is a 301-amino-acid chain: ADP-ribosyl cyclase/cyclic ADP-ribose hydrolase 1 (301 aa).

At 1-21 the chain is on the cytoplasmic side; that stretch reads MANCEFSPVSGDKPCCRLSRR. The chain crosses the membrane as a helical; Signal-anchor for type II membrane protein span at residues 22 to 43; the sequence is AQVCLGVCLLVLLILVVVVAVV. Residues 44–301 lie on the Extracellular side of the membrane; it reads LPRWRQQWSG…PEDSSCLSGI (258 aa). Cystine bridges form between Cys-68–Cys-83, Cys-100–Cys-181, and Cys-161–Cys-174. Asn-101 is a glycosylation site (N-linked (GlcNAc...) asparagine). Residue Cys-120 is part of the active site. Residue Asn-121 is glycosylated (N-linked (GlcNAc...) asparagine). Cys-202 is an active-site residue. Asn-210 and Asn-220 each carry an N-linked (GlcNAc...) asparagine glycan. Cystine bridges form between Cys-255–Cys-276 and Cys-288–Cys-297.

The protein belongs to the ADP-ribosyl cyclase family. In terms of assembly, homodimer.

The protein localises to the cell surface. The protein resides in the membrane. The catalysed reaction is NAD(+) = cyclic ADP-beta-D-ribose + nicotinamide + H(+). It carries out the reaction 2'-phospho-cyclic ADP-ribose + nicotinate = nicotinate-adenine dinucleotide phosphate. It catalyses the reaction NAD(+) + H2O = ADP-D-ribose + nicotinamide + H(+). The enzyme catalyses nicotinate + NADP(+) = nicotinate-adenine dinucleotide phosphate + nicotinamide. ATP inhibits the cADPR hydrolyzing activity. In terms of biological role, synthesizes cyclic ADP-ribose (cADPR), a second messenger for glucose-induced insulin secretion. Synthesizes the Ca(2+) mobilizer nicotinate-adenine dinucleotide phosphate, NAADP(+), from 2'-phospho-cADPR and nicotinic acid, as well as from NADP(+) and nicotinic acid. Also has cADPR hydrolase activity. The polypeptide is ADP-ribosyl cyclase/cyclic ADP-ribose hydrolase 1 (CD38) (Macaca fascicularis (Crab-eating macaque)).